A 257-amino-acid polypeptide reads, in one-letter code: Thiazole synthase (257 aa).

The Schiff-base intermediate with DXP role is filled by K98. Residues G159, 185-186 (AG), and 207-208 (NT) contribute to the 1-deoxy-D-xylulose 5-phosphate site.

The protein belongs to the ThiG family. Homotetramer. Forms heterodimers with either ThiH or ThiS.

Its subcellular location is the cytoplasm. It carries out the reaction [ThiS sulfur-carrier protein]-C-terminal-Gly-aminoethanethioate + 2-iminoacetate + 1-deoxy-D-xylulose 5-phosphate = [ThiS sulfur-carrier protein]-C-terminal Gly-Gly + 2-[(2R,5Z)-2-carboxy-4-methylthiazol-5(2H)-ylidene]ethyl phosphate + 2 H2O + H(+). It functions in the pathway cofactor biosynthesis; thiamine diphosphate biosynthesis. Its function is as follows. Catalyzes the rearrangement of 1-deoxy-D-xylulose 5-phosphate (DXP) to produce the thiazole phosphate moiety of thiamine. Sulfur is provided by the thiocarboxylate moiety of the carrier protein ThiS. In vitro, sulfur can be provided by H(2)S. This is Thiazole synthase from Anaeromyxobacter dehalogenans (strain 2CP-1 / ATCC BAA-258).